Reading from the N-terminus, the 306-residue chain is Agmatinase (306 aa).

Mn(2+) is bound by residues His126, Asp149, His151, Asp153, Asp230, and Asp232.

The protein belongs to the arginase family. Agmatinase subfamily. The cofactor is Mn(2+).

It carries out the reaction agmatine + H2O = urea + putrescine. It functions in the pathway amine and polyamine biosynthesis; putrescine biosynthesis via agmatine pathway; putrescine from agmatine: step 1/1. Functionally, catalyzes the formation of putrescine from agmatine. In Escherichia coli (strain SE11), this protein is Agmatinase.